We begin with the raw amino-acid sequence, 292 residues long: F-box protein SKIP28 (292 aa).

The 59-residue stretch at 21–79 (LIVLPYLHSLFELLSMIRVSRSLRDAIRDETALWTKLVIEPPLSSRLTDDILSEFSSKS) folds into the F-box; degenerate domain.

In terms of assembly, part of a SCF (ASK-cullin-F-box) protein ligase complex. Interacts with SKP1A/ASK1 and CUL1.

It participates in protein modification; protein ubiquitination. Functionally, component of SCF(ASK-cullin-F-box) E3 ubiquitin ligase complexes, which may mediate the ubiquitination and subsequent proteasomal degradation of target proteins. Required during the endosperm development in embryos. This is F-box protein SKIP28 (SKIP28) from Arabidopsis thaliana (Mouse-ear cress).